The chain runs to 1451 residues: Dual 3',5'-cyclic-AMP and -GMP phosphodiesterase 11 (1451 aa).

5 disordered regions span residues 1–54 (MGQA…PQIQ), 75–100 (ATTP…GGYG), 125–169 (LPAH…QVQQ), 235–262 (GNDV…GATT), and 327–374 (QHHH…GSGG). Over residues 11–21 (RGCRYKNKNKS) the composition is skewed to basic residues. Residues 24–45 (QQQQQQQQQQQQQQQHQQQQQQ) show a composition bias toward low complexity. Residues 77–91 (TPLQFQPTGRMNTEQ) show a composition bias toward polar residues. Composition is skewed to low complexity over residues 135 to 147 (SGAA…NGSS) and 160 to 169 (QQQQQYQVQQ). Polar residues predominate over residues 235–248 (GNDVVSSTSPTHAN). A compositionally biased stretch (basic residues) spans 327-340 (QHHHNHAHLHHSQH). Low complexity predominate over residues 341–355 (SHYQAGGAVGSSSLG). Residues 356-374 (STGGASGAGGAPSLGGSGG) are compositionally biased toward gly residues. 2 consecutive GAF domains span residues 419-572 (EVRT…GIGL) and 604-754 (TIEH…GMGI). One can recognise a PDEase domain in the interval 783 to 1107 (ATMDEAHRLR…GHWIDLADVV (325 aa)). The active-site Proton donor is the H860. Residues H864, H900, D901, and D1011 each coordinate a divalent metal cation. 4 disordered regions span residues 1109–1171 (TKTS…SNTN), 1200–1248 (DEQA…TPVS), 1268–1305 (QTSN…QELD), and 1325–1364 (INNH…IGSA). Low complexity-rich tracts occupy residues 1142-1171 (ASEA…SNTN) and 1218-1234 (CRSN…SCLS). Residues 1268-1277 (QTSNQAQTQK) are compositionally biased toward polar residues. The span at 1328 to 1355 (HSHHHNHSHSHNHNHHHHHHHHSHHNHS) shows a compositional bias: basic residues.

Belongs to the cyclic nucleotide phosphodiesterase family. Requires a divalent metal cation as cofactor. As to expression, in adults, it is enriched in Malpighian tubules.

It catalyses the reaction 3',5'-cyclic GMP + H2O = GMP + H(+). The catalysed reaction is 3',5'-cyclic AMP + H2O = AMP + H(+). Plays a role in signal transduction by regulating the intracellular concentration of cyclic nucleotides cAMP and cGMP. Dual-specificity phosphodiesterase that catalyzes the hydrolysis of both cAMP and cGMP to 5'-AMP and 5'-GMP, respectively. The protein is Dual 3',5'-cyclic-AMP and -GMP phosphodiesterase 11 (Pde11) of Drosophila melanogaster (Fruit fly).